Consider the following 263-residue polypeptide: Proteasome subunit beta type-4 (263 aa).

N-acetylmethionine is present on Met-1. Positions 1-44 (MEAFWESRTGHWAGGPAPGQFYRVPSTPSCLMDPMSAPARPITR) are excised as a propeptide. The residue at position 26 (Ser-26) is a Phosphoserine. Tyr-101 carries the phosphotyrosine modification.

Belongs to the peptidase T1B family. As to quaternary structure, the 26S proteasome consists of a 20S proteasome core and two 19S regulatory subunits. The 20S proteasome core is a barrel-shaped complex made of 28 subunits that are arranged in four stacked rings. The two outer rings are each formed by seven alpha subunits, and the two inner rings are formed by seven beta subunits. The proteolytic activity is exerted by three beta-subunits PSMB5, PSMB6 and PSMB7. Forms a ternary complex with SMAD1 and OAZ1 before PSMB4 is incorporated into the 20S proteasome. Interacts with PRPF19.

It localises to the cytoplasm. The protein localises to the nucleus. Its function is as follows. Non-catalytic component of the 20S core proteasome complex involved in the proteolytic degradation of most intracellular proteins. This complex plays numerous essential roles within the cell by associating with different regulatory particles. Associated with two 19S regulatory particles, forms the 26S proteasome and thus participates in the ATP-dependent degradation of ubiquitinated proteins. The 26S proteasome plays a key role in the maintenance of protein homeostasis by removing misfolded or damaged proteins that could impair cellular functions, and by removing proteins whose functions are no longer required. Associated with the PA200 or PA28, the 20S proteasome mediates ubiquitin-independent protein degradation. This type of proteolysis is required in several pathways including spermatogenesis (20S-PA200 complex) or generation of a subset of MHC class I-presented antigenic peptides (20S-PA28 complex). SMAD1/OAZ1/PSMB4 complex mediates the degradation of the CREBBP/EP300 repressor SNIP1. This Rattus norvegicus (Rat) protein is Proteasome subunit beta type-4 (Psmb4).